A 588-amino-acid polypeptide reads, in one-letter code: Cation channel sperm-associated protein 2 (588 aa).

Residues 1 to 106 (MAQEQGHFQL…LWAGWVLDSS (106 aa)) are Cytoplasmic-facing. A helical membrane pass occupies residues 107–129 (VFSKFIISLIFLNTFVLMVEIEL). Residues 130 to 138 (MESTNTALW) lie on the Extracellular side of the membrane. The helical transmembrane segment at 139-164 (PVKLALEVADWFILLSFIVEILLMWL) threads the bilayer. The Cytoplasmic segment spans residues 165–173 (ASFSLFWKD). A helical membrane pass occupies residues 174 to 198 (AWNVFDFFVTLLSLLPELVVLLGVP). The Extracellular portion of the chain corresponds to 199 to 201 (AHS). Residues 202 to 220 (VWLQLLRVCRVLRSLKLFA) form a helical membrane-spanning segment. The Cytoplasmic portion of the chain corresponds to 221–237 (RFRQIKVILLALVRALK). Residues 238–260 (SMTFLLMLLLIFFYIFAVTGVYF) traverse the membrane as a helical segment. Residues 261–279 (FREYSRSTIEGLEYNMFFS) lie on the Extracellular side of the membrane. Positions 280-292 (DLLNSLVTVFILF) form an intramembrane region, helical; Pore-forming. Residues 293–312 (TLDHWYAVLQDIWKVPESSR) lie on the Extracellular side of the membrane. Residues 313-339 (VFSSIYVILWLLLGSIIFRNIIVAMMV) traverse the membrane as a helical segment. The Cytoplasmic segment spans residues 340–588 (TNFQNIRSEL…VQALMSFEDK (249 aa)). The disordered stretch occupies residues 376–512 (SESLRGTSLG…YPVSHSISSH (137 aa)). Acidic residues predominate over residues 390 to 439 (DIIETSDASDDDDDDDDDDDDDDDDDDDKSDATESDNEESDSENSESENS). The segment covering 440–502 (ESEKIDPEKD…KVKEESKEKA (63 aa)) has biased composition (basic and acidic residues).

It belongs to the cation channel sperm-associated (TC 1.A.1.19) family. Component of the CatSper complex or CatSpermasome composed of the core pore-forming members CATSPER1, CATSPER2, CATSPER3 and CATSPER4 as well as auxiliary members CATSPERB, CATSPERG2, CATSPERD, CATSPERE, CATSPERZ, C2CD6/CATSPERT, SLCO6C1, TMEM249, TMEM262 and EFCAB9. HSPA1 may be an additional auxiliary complex member. The core complex members CATSPER1, CATSPER2, CATSPER3 and CATSPER4 form a heterotetrameric channel. The auxiliary CATSPERB, CATSPERG2, CATSPERD and CATSPERE subunits form a pavilion-like structure over the pore which stabilizes the complex through interactions with CATSPER4, CATSPER3, CATSPER1 and CATSPER2 respectively. SLCO6C1 interacts with CATSPERE and TMEM262/CATSPERH interacts with CATSPERB, further stabilizing the complex. C2CD6/CATSPERT interacts at least with CATSPERD and is required for targeting the CatSper complex in the flagellar membrane. Interacts with Ca(v)3.3/CACNA1I, leading to suppression of T-type calcium channel activity. As to expression, testis-specific.

It localises to the cell projection. It is found in the cilium. Its subcellular location is the flagellum membrane. It catalyses the reaction Ca(2+)(in) = Ca(2+)(out). Its activity is regulated as follows. In contrast to the human ortholog, not activated by progesterone. Activated by intracellular alkalinization. Pore-forming subunit of the CatSper complex, a sperm-specific voltage-gated calcium channel that plays a central role in sperm cell hyperactivation. Controls calcium entry to mediate the hyperactivated motility, a step needed for sperm motility which is essential late in the preparation of sperm for fertilization. The protein is Cation channel sperm-associated protein 2 (Catsper2) of Mus musculus (Mouse).